Here is a 187-residue protein sequence, read N- to C-terminus: GTP cyclohydrolase 1 (187 aa).

3 residues coordinate Zn(2+): cysteine 81, histidine 84, and cysteine 152.

It belongs to the GTP cyclohydrolase I family. Toroid-shaped homodecamer, composed of two pentamers of five dimers.

The enzyme catalyses GTP + H2O = 7,8-dihydroneopterin 3'-triphosphate + formate + H(+). It functions in the pathway cofactor biosynthesis; 7,8-dihydroneopterin triphosphate biosynthesis; 7,8-dihydroneopterin triphosphate from GTP: step 1/1. The protein is GTP cyclohydrolase 1 of Pyrobaculum aerophilum (strain ATCC 51768 / DSM 7523 / JCM 9630 / CIP 104966 / NBRC 100827 / IM2).